We begin with the raw amino-acid sequence, 159 residues long: MDNGDRSGAGAGAVGSAGSLGLRVGQAVFSSASLLFMSVGVEFFSYTAFCFLVTIMGLVIPWSCTLAMIDVYSVFVGCPLRVPGVMVIVVVGDCALSIVSFAAACSSAAVIDLLLQLHGSHSSPTFCGRYQLSAMMAFLSWLLMAASATFNLWFVASRW.

Residues 1–6 are Cytoplasmic-facing; it reads MDNGDR. A helical membrane pass occupies residues 7-29; the sequence is SGAGAGAVGSAGSLGLRVGQAVF. Residues 30–48 are Extracellular-facing; the sequence is SSASLLFMSVGVEFFSYTA. Residues 49–69 traverse the membrane as a helical segment; sequence FCFLVTIMGLVIPWSCTLAMI. The Cytoplasmic segment spans residues 70-94; it reads DVYSVFVGCPLRVPGVMVIVVVGDC. Residues 95 to 117 form a helical membrane-spanning segment; that stretch reads ALSIVSFAAACSSAAVIDLLLQL. Residues 118 to 134 lie on the Extracellular side of the membrane; it reads HGSHSSPTFCGRYQLSA. A helical transmembrane segment spans residues 135 to 155; that stretch reads MMAFLSWLLMAASATFNLWFV. Topologically, residues 156 to 159 are cytoplasmic; that stretch reads ASRW.

It belongs to the Casparian strip membrane proteins (CASP) family. Homodimer and heterodimers.

The protein resides in the cell membrane. The chain is CASP-like protein 5C1 from Zea mays (Maize).